The sequence spans 360 residues: Probable mannan endo-1,4-beta-mannosidase A (360 aa).

Residues 1-18 (MKLSQILTFASLLSGALA) form the signal peptide. Positions 142 and 178 each coordinate substrate. The Proton donor role is filled by Glu-179. A substrate-binding site is contributed by Tyr-254. The Nucleophile role is filled by Glu-287. N-linked (GlcNAc...) asparagine glycosylation is present at Asn-307. Trp-317 lines the substrate pocket.

The protein belongs to the glycosyl hydrolase 5 (cellulase A) family.

The protein localises to the secreted. It catalyses the reaction Random hydrolysis of (1-&gt;4)-beta-D-mannosidic linkages in mannans, galactomannans and glucomannans.. Functionally, endo-1,4-mannanase, a crucial enzyme for depolymerization of seed galactomannans and wood galactoglucomannans. This chain is Probable mannan endo-1,4-beta-mannosidase A (manA), found in Aspergillus clavatus (strain ATCC 1007 / CBS 513.65 / DSM 816 / NCTC 3887 / NRRL 1 / QM 1276 / 107).